The chain runs to 211 residues: Probable septum site-determining protein MinC (211 aa).

It belongs to the MinC family. In terms of assembly, interacts with MinD and FtsZ.

Its function is as follows. Cell division inhibitor that blocks the formation of polar Z ring septums. Rapidly oscillates between the poles of the cell to destabilize FtsZ filaments that have formed before they mature into polar Z rings. Prevents FtsZ polymerization. The protein is Probable septum site-determining protein MinC of Clostridium acetobutylicum (strain ATCC 824 / DSM 792 / JCM 1419 / IAM 19013 / LMG 5710 / NBRC 13948 / NRRL B-527 / VKM B-1787 / 2291 / W).